The primary structure comprises 511 residues: Bifunctional purine biosynthesis protein PurH (511 aa).

The region spanning 1–145 (MKRRAIISVS…KNHAYVTAVV (145 aa)) is the MGS-like domain.

Belongs to the PurH family.

It catalyses the reaction (6R)-10-formyltetrahydrofolate + 5-amino-1-(5-phospho-beta-D-ribosyl)imidazole-4-carboxamide = 5-formamido-1-(5-phospho-D-ribosyl)imidazole-4-carboxamide + (6S)-5,6,7,8-tetrahydrofolate. The catalysed reaction is IMP + H2O = 5-formamido-1-(5-phospho-D-ribosyl)imidazole-4-carboxamide. Its pathway is purine metabolism; IMP biosynthesis via de novo pathway; 5-formamido-1-(5-phospho-D-ribosyl)imidazole-4-carboxamide from 5-amino-1-(5-phospho-D-ribosyl)imidazole-4-carboxamide (10-formyl THF route): step 1/1. It functions in the pathway purine metabolism; IMP biosynthesis via de novo pathway; IMP from 5-formamido-1-(5-phospho-D-ribosyl)imidazole-4-carboxamide: step 1/1. The polypeptide is Bifunctional purine biosynthesis protein PurH (Anoxybacillus flavithermus (strain DSM 21510 / WK1)).